A 260-amino-acid chain; its full sequence is Ribosomal RNA small subunit methyltransferase J (260 aa).

S-adenosyl-L-methionine contacts are provided by residues 108-109 (RD), 124-125 (ER), and D178.

This sequence belongs to the methyltransferase superfamily. RsmJ family.

The protein localises to the cytoplasm. It catalyses the reaction guanosine(1516) in 16S rRNA + S-adenosyl-L-methionine = N(2)-methylguanosine(1516) in 16S rRNA + S-adenosyl-L-homocysteine + H(+). Functionally, specifically methylates the guanosine in position 1516 of 16S rRNA. The protein is Ribosomal RNA small subunit methyltransferase J of Ectopseudomonas mendocina (strain ymp) (Pseudomonas mendocina).